Consider the following 670-residue polypeptide: Probable Rho-GTPase-activating protein 9 (670 aa).

Residues 3-392 (DGFSNSFWSR…SFKNLDSLRD (390 aa)) enclose the F-BAR domain. The disordered stretch occupies residues 141-161 (NSKKSNLTDRKPIPTSRKSNK). A Rho-GAP domain is found at 425–622 (SSLTEDNLIV…DLINEFENLF (198 aa)). Thr-640 is modified (phosphothreonine). Over residues 641–663 (PITTSPQKLKLPRSSSPCKNPSP) the composition is skewed to polar residues. Positions 641 to 670 (PITTSPQKLKLPRSSSPCKNPSPTRRFRPF) are disordered. Ser-645 is subject to Phosphoserine.

The protein localises to the cytoplasm. The chain is Probable Rho-GTPase-activating protein 9 (rga9) from Schizosaccharomyces pombe (strain 972 / ATCC 24843) (Fission yeast).